Reading from the N-terminus, the 255-residue chain is Electron transfer flavoprotein beta subunit lysine methyltransferase (255 aa).

The N-terminal 32 residues, Met1 to Val32, are a transit peptide targeting the mitochondrion.

Belongs to the methyltransferase superfamily. ETFBKMT family. In terms of assembly, interacts with HSPD1; this protein may possibly be a methylation substrate.

It is found in the cytoplasm. Its subcellular location is the mitochondrion matrix. The catalysed reaction is L-lysyl-[protein] + 3 S-adenosyl-L-methionine = N(6),N(6),N(6)-trimethyl-L-lysyl-[protein] + 3 S-adenosyl-L-homocysteine + 3 H(+). Protein-lysine methyltransferase that selectively trimethylates the flavoprotein ETFB in mitochondria. Thereby, may negatively regulate the function of ETFB in electron transfer from Acyl-CoA dehydrogenases. The chain is Electron transfer flavoprotein beta subunit lysine methyltransferase from Mus musculus (Mouse).